Reading from the N-terminus, the 329-residue chain is Carbonic anhydrase (329 aa).

A chloroplast transit peptide-like region spans residues 1-108 (MSTASAFAIN…AAARIDQITA (108 aa)).

It belongs to the beta-class carbonic anhydrase family. As to quaternary structure, homohexamer.

Its subcellular location is the cytoplasm. It catalyses the reaction hydrogencarbonate + H(+) = CO2 + H2O. Functionally, reversible hydration of carbon dioxide. This is Carbonic anhydrase from Flaveria pringlei.